The primary structure comprises 487 residues: uncharacterized protein (487 aa).

Residues 7-28 (HVISIFETLGAYFINIFYNFLY) form a helical membrane-spanning segment. N-linked (GlcNAc...) asparagine; by host glycans are attached at residues Asn73, Asn83, and Asn195. Residues 196 to 235 (RSLLHQIEELTSEKKSLLADLSTLRKKYEKRQSEYRRLVQ) adopt a coiled-coil conformation. Positions 294-305 (TSQELTSKSPNN) are enriched in polar residues. A disordered region spans residues 294–324 (TSQELTSKSPNNYPVPHSRTIVSKPSDNYPV). N-linked (GlcNAc...) asparagine; by host glycosylation occurs at Asn462.

It belongs to the asfivirus B475L family.

The protein localises to the host membrane. This is an uncharacterized protein from African swine fever virus (isolate Tick/South Africa/Pretoriuskop Pr4/1996) (ASFV).